Here is a 616-residue protein sequence, read N- to C-terminus: Chaperone protein HtpG (616 aa).

The tract at residues 1–334 (MAEKQIHTFQ…TADLPLNVSR (334 aa)) is a; substrate-binding. The b stretch occupies residues 335–549 (EILQGNKVVD…ENEMGGNMER (215 aa)). Positions 550 to 616 (IMKSLGQDVP…FVKRINKLIN (67 aa)) are c.

Belongs to the heat shock protein 90 family. As to quaternary structure, homodimer.

Its subcellular location is the cytoplasm. Molecular chaperone. Has ATPase activity. This Ruthia magnifica subsp. Calyptogena magnifica protein is Chaperone protein HtpG.